The chain runs to 245 residues: Tetraspanin-6 (245 aa).

Topologically, residues 1 to 19 are cytoplasmic; it reads MASPSRRLQTKPVITCFKS. The helical transmembrane segment at 20-40 threads the bilayer; that stretch reads VLLIYTFIFWITGVILLAVGI. The Extracellular segment spans residues 41-59; it reads WGKVSLENYFSLLNEKATN. The chain crosses the membrane as a helical span at residues 60 to 80; that stretch reads VPFVLIATGTVIILLGTFGCF. Residues 81 to 93 lie on the Cytoplasmic side of the membrane; it reads ATCRASAWMLKLY. The helical transmembrane segment at 94–114 threads the bilayer; the sequence is AMFLTLVFLVELVAAIVGFVF. At 115 to 208 the chain is on the extracellular side; that stretch reads RHEIKNSFKN…IKVMTIIESE (94 aa). Asparagine 134 carries N-linked (GlcNAc...) asparagine glycosylation. The helical transmembrane segment at 209-229 threads the bilayer; that stretch reads MGVVAGISFGVACFQLIGIFL. Residues 230 to 245 are Cytoplasmic-facing; it reads AYCLSRAITNNQYEIV.

Belongs to the tetraspanin (TM4SF) family.

The protein resides in the membrane. This Homo sapiens (Human) protein is Tetraspanin-6 (TSPAN6).